We begin with the raw amino-acid sequence, 514 residues long: Glutathione-binding protein GsiB (514 aa).

Positions 1 to 26 (MARAVHRSGLVALGIATALMASCAFA) are cleaved as a signal peptide.

The protein belongs to the bacterial solute-binding protein 5 family. In terms of assembly, the complex is composed of two ATP-binding proteins (GsiA), two transmembrane proteins (GsiC and GsiD) and a solute-binding protein (GsiB).

The protein localises to the periplasm. Part of the ABC transporter complex GsiABCD involved in glutathione import. Binds glutathione. This Shigella flexneri serotype 5b (strain 8401) protein is Glutathione-binding protein GsiB.